A 117-amino-acid polypeptide reads, in one-letter code: MHILDSFDKKTLRDDIPEFAPGDTVKVHVNIIEGKTARVQVFQGYVMGRQGYGVRETFRVRKVSFGIGVERVFPVHSPIIDKIEVVTKGDVRRAKLYYMRDRHGKAARIREKRADAK.

Belongs to the bacterial ribosomal protein bL19 family.

This protein is located at the 30S-50S ribosomal subunit interface and may play a role in the structure and function of the aminoacyl-tRNA binding site. The protein is Large ribosomal subunit protein bL19 of Micrococcus luteus (strain ATCC 4698 / DSM 20030 / JCM 1464 / CCM 169 / CCUG 5858 / IAM 1056 / NBRC 3333 / NCIMB 9278 / NCTC 2665 / VKM Ac-2230) (Micrococcus lysodeikticus).